Here is a 220-residue protein sequence, read N- to C-terminus: Ribosomal RNA small subunit methyltransferase G (220 aa).

Gly78, Leu83, and Arg144 together coordinate S-adenosyl-L-methionine.

Belongs to the methyltransferase superfamily. RNA methyltransferase RsmG family.

The protein localises to the cytoplasm. The catalysed reaction is guanosine(527) in 16S rRNA + S-adenosyl-L-methionine = N(7)-methylguanosine(527) in 16S rRNA + S-adenosyl-L-homocysteine. In terms of biological role, specifically methylates the N7 position of guanine in position 527 of 16S rRNA. The protein is Ribosomal RNA small subunit methyltransferase G of Alkalilimnicola ehrlichii (strain ATCC BAA-1101 / DSM 17681 / MLHE-1).